Here is a 550-residue protein sequence, read N- to C-terminus: CTP synthase (550 aa).

Residues 1–277 (MNGSADAGPR…GRAVERALGL (277 aa)) form an amidoligase domain region. Ser-23 lines the CTP pocket. Ser-23 contacts UTP. An ATP-binding site is contributed by 24–29 (SLGKGI). Tyr-64 lines the L-glutamine pocket. Asp-81 serves as a coordination point for ATP. Residues Asp-81 and Glu-151 each coordinate Mg(2+). Residues 158–160 (DIE), 198–203 (KTKPTQ), and Lys-234 each bind CTP. UTP contacts are provided by residues 198–203 (KTKPTQ) and Lys-234. Residues 302 to 549 (KIAIAGKYVK…VEAALAYQER (248 aa)) enclose the Glutamine amidotransferase type-1 domain. L-glutamine is bound at residue Gly-364. The active-site Nucleophile; for glutamine hydrolysis is Cys-391. L-glutamine-binding positions include 392-395 (LGLQ), Glu-415, and Arg-472. Active-site residues include His-522 and Glu-524.

The protein belongs to the CTP synthase family. As to quaternary structure, homotetramer.

It carries out the reaction UTP + L-glutamine + ATP + H2O = CTP + L-glutamate + ADP + phosphate + 2 H(+). The enzyme catalyses L-glutamine + H2O = L-glutamate + NH4(+). It catalyses the reaction UTP + NH4(+) + ATP = CTP + ADP + phosphate + 2 H(+). The protein operates within pyrimidine metabolism; CTP biosynthesis via de novo pathway; CTP from UDP: step 2/2. Its activity is regulated as follows. Allosterically activated by GTP, when glutamine is the substrate; GTP has no effect on the reaction when ammonia is the substrate. The allosteric effector GTP functions by stabilizing the protein conformation that binds the tetrahedral intermediate(s) formed during glutamine hydrolysis. Inhibited by the product CTP, via allosteric rather than competitive inhibition. Its function is as follows. Catalyzes the ATP-dependent amination of UTP to CTP with either L-glutamine or ammonia as the source of nitrogen. Regulates intracellular CTP levels through interactions with the four ribonucleotide triphosphates. The chain is CTP synthase from Thermus thermophilus (strain ATCC BAA-163 / DSM 7039 / HB27).